We begin with the raw amino-acid sequence, 185 residues long: Ribosome-recycling factor (185 aa).

Positions 140–168 (KKEQKDGNITEDEQRNLEKQVQKITDDST) are disordered.

The protein belongs to the RRF family.

It is found in the cytoplasm. Functionally, responsible for the release of ribosomes from messenger RNA at the termination of protein biosynthesis. May increase the efficiency of translation by recycling ribosomes from one round of translation to another. The polypeptide is Ribosome-recycling factor (Lactobacillus helveticus (strain DPC 4571)).